The following is a 116-amino-acid chain: Ribosome-binding factor A (116 aa).

Belongs to the RbfA family. Monomer. Binds 30S ribosomal subunits, but not 50S ribosomal subunits or 70S ribosomes.

It is found in the cytoplasm. One of several proteins that assist in the late maturation steps of the functional core of the 30S ribosomal subunit. Associates with free 30S ribosomal subunits (but not with 30S subunits that are part of 70S ribosomes or polysomes). Required for efficient processing of 16S rRNA. May interact with the 5'-terminal helix region of 16S rRNA. In Streptococcus uberis (strain ATCC BAA-854 / 0140J), this protein is Ribosome-binding factor A.